A 464-amino-acid chain; its full sequence is Argininosuccinate lyase (464 aa).

The protein belongs to the lyase 1 family. Argininosuccinate lyase subfamily.

Its subcellular location is the cytoplasm. The enzyme catalyses 2-(N(omega)-L-arginino)succinate = fumarate + L-arginine. It participates in amino-acid biosynthesis; L-arginine biosynthesis; L-arginine from L-ornithine and carbamoyl phosphate: step 3/3. In Pseudomonas syringae pv. syringae (strain B728a), this protein is Argininosuccinate lyase.